A 40-amino-acid chain; its full sequence is MKGTKKKTPCNKKLGGYLKEQKGRLYIIRRCVVMLICWHD.

Positions proline 9–aspartate 40 are required for DVL/RTFL small polypeptide activity. The helical transmembrane segment at lysine 12–isoleucine 28 threads the bilayer.

The protein belongs to the DVL/RTFL small polypeptides family. As to expression, mostly expressed in flowers and stems, and, to a lower extent, in roots and leaves.

It localises to the cell membrane. In terms of biological role, small polypeptide acting as a regulatory molecule which coordinates cellular responses required for differentiation, growth and development, including leaves shape, pedicule elongation, inflorescence organization and fruit maturation, probably by restricting polar cell proliferation in lateral organs and coordinating socket cell recruitment and differentiation at trichome sites. This chain is Small polypeptide DEVIL 3, found in Arabidopsis thaliana (Mouse-ear cress).